A 393-amino-acid polypeptide reads, in one-letter code: Pre-mRNA-splicing regulator WTAP (393 aa).

Residues 242-393 are disordered; sequence QIQISGNRTP…SSVNVQGSVL (152 aa). Over residues 254-267 the composition is skewed to basic and acidic residues; the sequence is EPKDEGETSGKDCG. Composition is skewed to polar residues over residues 272 to 286 and 321 to 353; these read GPSN…THSS and DGSS…SNDT. Over residues 354 to 365 the composition is skewed to basic and acidic residues; that stretch reads DSNHDSQEEKPV. Polar residues predominate over residues 369–393; sequence GNRTVSSRHLQNGLDSSVNVQGSVL.

Belongs to the fl(2)d family. Component of the WMM complex, a N6-methyltransferase complex composed of a catalytic subcomplex, named MAC, and of an associated subcomplex, named MACOM. Component of the MACOM subcomplex.

The protein resides in the nucleus speckle. Its subcellular location is the nucleus. It localises to the nucleoplasm. In terms of biological role, associated component of the WMM complex, a complex that mediates N6-methyladenosine (m6A) methylation of RNAs, a modification that plays a role in the efficiency of mRNA splicing and RNA processing. This chain is Pre-mRNA-splicing regulator WTAP, found in Xenopus laevis (African clawed frog).